The primary structure comprises 331 residues: MKKPVVIGLAIAAIVAVIAGGTWWYQSRQDDGLTLYGNVDIRTVNISFRVGGRLASLNVDEGDTIKAGQVLGELDHAPYENALMQAKAGVSVAQAQYDLMLAGYRDEEIAQAAAAVRQAQAAYDYAQNFYNRQQGLWKSRTISANDLENARSSRDQAQATLKSAQDKLSQYRTGNREQDIAQAKASLEQAKAQLAQAQLDLQDTTLIAPANGTLLTRAVEPGSMLNAGSTVLTLSLTRPVWVRAYVDERNLSQTQPGRDILLYTDGRPDKPYHGKIGFVSPTAEFTPKTVETPDLRTDLVYRLRIIVTDADDALRQGMPVTVKFNDEARHE.

The first 19 residues, 1–19, serve as a signal peptide directing secretion; sequence MKKPVVIGLAIAAIVAVIA. Positions 107 to 208 form a coiled coil; it reads EEIAQAAAAV…LDLQDTTLIA (102 aa).

It belongs to the UPF0194 family.

Its subcellular location is the periplasm. The chain is UPF0194 membrane protein YbhG from Salmonella agona (strain SL483).